The chain runs to 461 residues: Inositol-trisphosphate 3-kinase A (461 aa).

The interval 1-29 (MTLPGGPTGMARPGGARPCSPGLERAPRR) is disordered. The segment at 1–133 (MTLPGGPTGM…SVSSTGSSSL (133 aa)) is required for cytoskeleton location. Omega-N-methylarginine occurs at positions 35, 55, and 62. Residues 49 to 160 (AAAGEPRARG…GNVQLEAGED (112 aa)) form a disordered region. Residues 118-134 (RRLSTSSVSSTGSSSLL) show a composition bias toward low complexity. 2 positions are modified to phosphoserine: serine 137 and serine 197. Residues serine 197, lysine 209, 249 to 251 (QDL), and aspartate 262 each bind ATP. Substrate is bound by residues lysine 264 and arginine 285. A calmodulin-binding region spans residues 287 to 295 (DMYKKMLAV). Residue 312-319 (KPRYMQWR) participates in substrate binding. Positions 336 and 416 each coordinate ATP. Residue lysine 419 coordinates substrate.

This sequence belongs to the inositol phosphokinase (IPK) family. Expressed in brain.

Its subcellular location is the cytoplasm. It is found in the cytoskeleton. It catalyses the reaction 1D-myo-inositol 1,4,5-trisphosphate + ATP = 1D-myo-inositol 1,3,4,5-tetrakisphosphate + ADP + H(+). With respect to regulation, activated by calcium/calmodulin. Its function is as follows. Catalyzes the phosphorylation of 1D-myo-inositol 1,4,5-trisphosphate (InsP3) into 1D-myo-inositol 1,3,4,5-tetrakisphosphate and participates to the regulation of calcium homeostasis. The polypeptide is Inositol-trisphosphate 3-kinase A (Homo sapiens (Human)).